A 241-amino-acid chain; its full sequence is ATP synthase subunit a (241 aa).

The next 5 helical transmembrane spans lie at 30–50 (GQVF…ISLG), 91–111 (FIGT…LIPW), 128–148 (INTT…AGLS), 193–213 (LVVG…VMFL), and 214–234 (GLFT…YYIG).

This sequence belongs to the ATPase A chain family. F-type ATPases have 2 components, CF(1) - the catalytic core - and CF(0) - the membrane proton channel. CF(1) has five subunits: alpha(3), beta(3), gamma(1), delta(1), epsilon(1). CF(0) has four main subunits: a, b, b' and c.

It is found in the cellular thylakoid membrane. Key component of the proton channel; it plays a direct role in the translocation of protons across the membrane. The polypeptide is ATP synthase subunit a (Prochlorococcus marinus (strain MIT 9215)).